A 113-amino-acid chain; its full sequence is uncharacterized protein (113 aa).

This is an uncharacterized protein from Mycoplasma pneumoniae (strain ATCC 29342 / M129 / Subtype 1) (Mycoplasmoides pneumoniae).